The chain runs to 247 residues: uncharacterized protein (247 aa).

The disordered stretch occupies residues 161 to 187 (KEQSDATSDATTSEKNKSPECPKATTE). Residues 172-187 (TSEKNKSPECPKATTE) are compositionally biased toward basic and acidic residues.

This is an uncharacterized protein from Mus musculus (Mouse).